The following is a 293-amino-acid chain: Bifunctional protein FolD (293 aa).

Residues G166–S168 and I232 contribute to the NADP(+) site.

This sequence belongs to the tetrahydrofolate dehydrogenase/cyclohydrolase family. Homodimer.

The enzyme catalyses (6R)-5,10-methylene-5,6,7,8-tetrahydrofolate + NADP(+) = (6R)-5,10-methenyltetrahydrofolate + NADPH. It carries out the reaction (6R)-5,10-methenyltetrahydrofolate + H2O = (6R)-10-formyltetrahydrofolate + H(+). It functions in the pathway one-carbon metabolism; tetrahydrofolate interconversion. Functionally, catalyzes the oxidation of 5,10-methylenetetrahydrofolate to 5,10-methenyltetrahydrofolate and then the hydrolysis of 5,10-methenyltetrahydrofolate to 10-formyltetrahydrofolate. The sequence is that of Bifunctional protein FolD from Yersinia enterocolitica serotype O:8 / biotype 1B (strain NCTC 13174 / 8081).